Reading from the N-terminus, the 268-residue chain is Aliphatic sulfonates import ATP-binding protein SsuB 3 (268 aa).

The tract at residues 1–27 (MTAAEAPLPPLAPRERTATTAAERRTG) is disordered. Residues 13 to 26 (PRERTATTAAERRT) are compositionally biased toward basic and acidic residues. One can recognise an ABC transporter domain in the interval 32–247 (VSLSGVRKSF…DRNDPEALRY (216 aa)). 64-71 (GPSGTGKT) contributes to the ATP binding site.

Belongs to the ABC transporter superfamily. Aliphatic sulfonates importer (TC 3.A.1.17.2) family. The complex is composed of two ATP-binding proteins (SsuB), two transmembrane proteins (SsuC) and a solute-binding protein (SsuA).

The protein resides in the cell membrane. The catalysed reaction is ATP + H2O + aliphatic sulfonate-[sulfonate-binding protein]Side 1 = ADP + phosphate + aliphatic sulfonateSide 2 + [sulfonate-binding protein]Side 1.. Its function is as follows. Part of the ABC transporter complex SsuABC involved in aliphatic sulfonates import. Responsible for energy coupling to the transport system. This Rhodococcus jostii (strain RHA1) protein is Aliphatic sulfonates import ATP-binding protein SsuB 3.